A 356-amino-acid polypeptide reads, in one-letter code: DNA polymerase IV (356 aa).

A UmuC domain is found at 4 to 185; sequence IIHIDMDCYY…LALGKIPGVG (182 aa). Residues Asp-8 and Asp-103 each coordinate Mg(2+). Residue Glu-104 is part of the active site.

The protein belongs to the DNA polymerase type-Y family. In terms of assembly, monomer. It depends on Mg(2+) as a cofactor.

It is found in the cytoplasm. It catalyses the reaction DNA(n) + a 2'-deoxyribonucleoside 5'-triphosphate = DNA(n+1) + diphosphate. Poorly processive, error-prone DNA polymerase involved in untargeted mutagenesis. Copies undamaged DNA at stalled replication forks, which arise in vivo from mismatched or misaligned primer ends. These misaligned primers can be extended by PolIV. Exhibits no 3'-5' exonuclease (proofreading) activity. May be involved in translesional synthesis, in conjunction with the beta clamp from PolIII. This chain is DNA polymerase IV, found in Pseudoalteromonas atlantica (strain T6c / ATCC BAA-1087).